A 425-amino-acid chain; its full sequence is UPF0229 protein YE2273 (425 aa).

Residues 84-110 (TNDRIERPQGGGGGSGSGQGNAGQDGE) are disordered. Residues 92 to 108 (QGGGGGSGSGQGNAGQD) show a composition bias toward gly residues.

This sequence belongs to the UPF0229 family.

The sequence is that of UPF0229 protein YE2273 from Yersinia enterocolitica serotype O:8 / biotype 1B (strain NCTC 13174 / 8081).